We begin with the raw amino-acid sequence, 241 residues long: ATP synthase subunit a (241 aa).

A run of 5 helical transmembrane segments spans residues 30–50 (GQVFMTSWLLIGALLALVVIG), 91–111 (FIGTLFLFIFVSNWGGALVPW), 128–148 (INTTVALALLVSLSYFYAGLS), 193–213 (LVVAVLVFLVPLVLPVPVMFL), and 214–234 (GLFTSAIQALIFATLAAYYIG).

It belongs to the ATPase A chain family. As to quaternary structure, F-type ATPases have 2 components, CF(1) - the catalytic core - and CF(0) - the membrane proton channel. CF(1) has five subunits: alpha(3), beta(3), gamma(1), delta(1), epsilon(1). CF(0) has four main subunits: a, b, b' and c.

Its subcellular location is the cellular thylakoid membrane. In terms of biological role, key component of the proton channel; it plays a direct role in the translocation of protons across the membrane. The protein is ATP synthase subunit a of Prochlorococcus marinus (strain NATL1A).